The sequence spans 289 residues: Urease accessory protein UreD (289 aa).

The protein belongs to the UreD family. As to quaternary structure, ureD, UreF and UreG form a complex that acts as a GTP-hydrolysis-dependent molecular chaperone, activating the urease apoprotein by helping to assemble the nickel containing metallocenter of UreC. The UreE protein probably delivers the nickel.

The protein localises to the cytoplasm. In terms of biological role, required for maturation of urease via the functional incorporation of the urease nickel metallocenter. This Cupriavidus necator (strain ATCC 17699 / DSM 428 / KCTC 22496 / NCIMB 10442 / H16 / Stanier 337) (Ralstonia eutropha) protein is Urease accessory protein UreD.